We begin with the raw amino-acid sequence, 366 residues long: sn-glycerol-3-phosphate import ATP-binding protein UgpC (366 aa).

In terms of domain architecture, ABC transporter spans 4–235 (VTLRNVRKTY…PASTFVASFI (232 aa)). 37-44 (GPSGCGKS) serves as a coordination point for ATP.

It belongs to the ABC transporter superfamily. sn-glycerol-3-phosphate importer (TC 3.A.1.1.3) family. The complex is composed of two ATP-binding proteins (UgpC), two transmembrane proteins (UgpA and UgpE) and a solute-binding protein (UgpB).

Its subcellular location is the cell inner membrane. It catalyses the reaction sn-glycerol 3-phosphate(out) + ATP + H2O = sn-glycerol 3-phosphate(in) + ADP + phosphate + H(+). Its function is as follows. Part of the ABC transporter complex UgpBAEC involved in sn-glycerol-3-phosphate (G3P) import. Responsible for energy coupling to the transport system. The chain is sn-glycerol-3-phosphate import ATP-binding protein UgpC from Rhodopseudomonas palustris (strain BisB18).